The following is a 348-amino-acid chain: Signal recognition particle receptor FtsY (348 aa).

GTP is bound by residues 143 to 150 (GVNGVGKT), 225 to 229 (DTSGR), and 289 to 292 (TKMD).

The protein belongs to the GTP-binding SRP family. FtsY subfamily. As to quaternary structure, part of the signal recognition particle protein translocation system, which is composed of SRP and FtsY.

The protein resides in the cell membrane. It is found in the cytoplasm. It catalyses the reaction GTP + H2O = GDP + phosphate + H(+). In terms of biological role, involved in targeting and insertion of nascent membrane proteins into the cytoplasmic membrane. Acts as a receptor for the complex formed by the signal recognition particle (SRP) and the ribosome-nascent chain (RNC). The polypeptide is Signal recognition particle receptor FtsY (Mycoplasma pneumoniae (strain ATCC 29342 / M129 / Subtype 1) (Mycoplasmoides pneumoniae)).